We begin with the raw amino-acid sequence, 812 residues long: Valine--tRNA ligase (812 aa).

The 'HIGH' region motif lies at 46 to 56; it reads PTVSGQLHIGH. The 'KMSKS' region signature appears at 536-540; that stretch reads KMSKS. K539 contributes to the ATP binding site.

The protein belongs to the class-I aminoacyl-tRNA synthetase family. ValS type 2 subfamily. As to quaternary structure, monomer.

The protein resides in the cytoplasm. It carries out the reaction tRNA(Val) + L-valine + ATP = L-valyl-tRNA(Val) + AMP + diphosphate. Functionally, catalyzes the attachment of valine to tRNA(Val). As ValRS can inadvertently accommodate and process structurally similar amino acids such as threonine, to avoid such errors, it has a 'posttransfer' editing activity that hydrolyzes mischarged Thr-tRNA(Val) in a tRNA-dependent manner. The protein is Valine--tRNA ligase of Rickettsia bellii (strain RML369-C).